An 87-amino-acid chain; its full sequence is Small ribosomal subunit protein uS19m (87 aa).

It belongs to the universal ribosomal protein uS19 family.

The protein localises to the mitochondrion. The protein is Small ribosomal subunit protein uS19m (mrps19) of Dictyostelium citrinum (Slime mold).